A 404-amino-acid polypeptide reads, in one-letter code: MNLINKKNLNIYLCGPTVYSDVHIGNLRTIIIFDAIFECLKNKGFSINFLHNITDIDDKIIEKAQELGISEAELTEKYTNEYFKILEIFNIKKPTKIVKVTEKIEKIIEYIKLLEKKGFTYYNKNNDLVFDILKIPNYGIISGQKIESLLDKNTKKTKSKNDFVLWKKTQKGLFFKSFFGLGRPGWHTECAALIYDYFQKKSLDLHGGGVDLIFPHHENENAQHFALTGNPIAENWFRSGFVNLNGKKMAKSLNNVLLAKDFSHKYNPDIIRSIFLSINPTVPINLTEELIKNHKKLIEKYQKICFEWYFDKKNEKTEKVEQVLNLFIEGKFAKANFLIMELIKQKENSTIRKIFLNLRFNFTKMHLNPESQEKIKNWNKLIMDKNYSEADKIRKELWKIFKNS.

Residue Cys14 participates in Zn(2+) binding. A 'HIGH' region motif is present at residues 16–26 (PTVYSDVHIGN). Residues Cys190, His216, and Glu220 each coordinate Zn(2+). Residues 248-252 (KMAKS) carry the 'KMSKS' region motif. An ATP-binding site is contributed by Lys251.

This sequence belongs to the class-I aminoacyl-tRNA synthetase family. As to quaternary structure, monomer. Requires Zn(2+) as cofactor.

It localises to the cytoplasm. It carries out the reaction tRNA(Cys) + L-cysteine + ATP = L-cysteinyl-tRNA(Cys) + AMP + diphosphate. The sequence is that of Cysteine--tRNA ligase from Mesomycoplasma hyopneumoniae (strain 232) (Mycoplasma hyopneumoniae).